Consider the following 155-residue polypeptide: Aspartate 1-decarboxylase (155 aa).

Ser-24 acts as the Schiff-base intermediate with substrate; via pyruvic acid in catalysis. Position 24 is a pyruvic acid (Ser) (Ser-24). Thr-56 lines the substrate pocket. The active-site Proton donor is Tyr-57. Residue 72–74 participates in substrate binding; it reads GAA.

The protein belongs to the PanD family. Heterooctamer of four alpha and four beta subunits. It depends on pyruvate as a cofactor. Post-translationally, is synthesized initially as an inactive proenzyme, which is activated by self-cleavage at a specific serine bond to produce a beta-subunit with a hydroxyl group at its C-terminus and an alpha-subunit with a pyruvoyl group at its N-terminus.

The protein localises to the cytoplasm. It carries out the reaction L-aspartate + H(+) = beta-alanine + CO2. It participates in cofactor biosynthesis; (R)-pantothenate biosynthesis; beta-alanine from L-aspartate: step 1/1. Functionally, catalyzes the pyruvoyl-dependent decarboxylation of aspartate to produce beta-alanine. This Agrobacterium fabrum (strain C58 / ATCC 33970) (Agrobacterium tumefaciens (strain C58)) protein is Aspartate 1-decarboxylase.